Consider the following 591-residue polypeptide: V-type ATP synthase alpha chain (591 aa).

ATP is bound at residue 233-240; that stretch reads GPFGAGKT.

This sequence belongs to the ATPase alpha/beta chains family.

The catalysed reaction is ATP + H2O + 4 H(+)(in) = ADP + phosphate + 5 H(+)(out). Functionally, produces ATP from ADP in the presence of a proton gradient across the membrane. The V-type alpha chain is a catalytic subunit. The chain is V-type ATP synthase alpha chain from Streptococcus pyogenes serotype M49 (strain NZ131).